We begin with the raw amino-acid sequence, 910 residues long: Alanine--tRNA ligase (910 aa).

Positions 488–505 (RHEEKKEDSKSEKGENTA) are enriched in basic and acidic residues. The interval 488-507 (RHEEKKEDSKSEKGENTAEK) is disordered. Zn(2+)-binding residues include histidine 614, histidine 618, cysteine 718, and histidine 722.

It belongs to the class-II aminoacyl-tRNA synthetase family. Zn(2+) is required as a cofactor.

It is found in the cytoplasm. It carries out the reaction tRNA(Ala) + L-alanine + ATP = L-alanyl-tRNA(Ala) + AMP + diphosphate. Functionally, catalyzes the attachment of alanine to tRNA(Ala) in a two-step reaction: alanine is first activated by ATP to form Ala-AMP and then transferred to the acceptor end of tRNA(Ala). Also edits incorrectly charged Ser-tRNA(Ala) and Gly-tRNA(Ala) via its editing domain. The protein is Alanine--tRNA ligase of Methanococcus aeolicus (strain ATCC BAA-1280 / DSM 17508 / OCM 812 / Nankai-3).